We begin with the raw amino-acid sequence, 286 residues long: Bifunctional protein FolD (286 aa).

Residues 165-167 (GRS), Ser190, and Ile231 each bind NADP(+).

This sequence belongs to the tetrahydrofolate dehydrogenase/cyclohydrolase family. In terms of assembly, homodimer.

It carries out the reaction (6R)-5,10-methylene-5,6,7,8-tetrahydrofolate + NADP(+) = (6R)-5,10-methenyltetrahydrofolate + NADPH. It catalyses the reaction (6R)-5,10-methenyltetrahydrofolate + H2O = (6R)-10-formyltetrahydrofolate + H(+). The protein operates within one-carbon metabolism; tetrahydrofolate interconversion. Its function is as follows. Catalyzes the oxidation of 5,10-methylenetetrahydrofolate to 5,10-methenyltetrahydrofolate and then the hydrolysis of 5,10-methenyltetrahydrofolate to 10-formyltetrahydrofolate. In Thermodesulfovibrio yellowstonii (strain ATCC 51303 / DSM 11347 / YP87), this protein is Bifunctional protein FolD.